Consider the following 762-residue polypeptide: 5-methyltetrahydropteroyltriglutamate--homocysteine methyltransferase (762 aa).

Residues 16–19 (RELK) and Lys-117 contribute to the 5-methyltetrahydropteroyltri-L-glutamate site. L-homocysteine contacts are provided by residues 438–440 (IGS) and Glu-491. L-methionine is bound by residues 438 to 440 (IGS) and Glu-491. Residues 522–523 (RC) and Trp-568 each bind 5-methyltetrahydropteroyltri-L-glutamate. Asp-606 provides a ligand contact to L-homocysteine. Asp-606 lines the L-methionine pocket. Residue Glu-612 participates in 5-methyltetrahydropteroyltri-L-glutamate binding. Positions 648, 650, and 672 each coordinate Zn(2+). His-701 (proton donor) is an active-site residue. A Zn(2+)-binding site is contributed by Cys-733.

Belongs to the vitamin-B12 independent methionine synthase family. Zn(2+) is required as a cofactor.

The enzyme catalyses 5-methyltetrahydropteroyltri-L-glutamate + L-homocysteine = tetrahydropteroyltri-L-glutamate + L-methionine. The protein operates within amino-acid biosynthesis; L-methionine biosynthesis via de novo pathway; L-methionine from L-homocysteine (MetE route): step 1/1. Its function is as follows. Catalyzes the transfer of a methyl group from 5-methyltetrahydrofolate to homocysteine resulting in methionine formation. This is 5-methyltetrahydropteroyltriglutamate--homocysteine methyltransferase from Pseudomonas fluorescens (strain ATCC BAA-477 / NRRL B-23932 / Pf-5).